The sequence spans 359 residues: Glyceraldehyde-3-phosphate dehydrogenase, glycosomal (359 aa).

NAD(+) contacts are provided by residues 12–13 (RI), Asp-38, Gln-91, and Ser-134. D-glyceraldehyde 3-phosphate contacts are provided by residues 165–167 (SCT), Thr-197, 226–227 (TG), and Arg-249. The active-site Nucleophile is Cys-166. Asn-335 provides a ligand contact to NAD(+). The short motif at 357-359 (ARL) is the Microbody targeting signal element.

The protein belongs to the glyceraldehyde-3-phosphate dehydrogenase family. As to quaternary structure, homotetramer.

Its subcellular location is the glycosome. The catalysed reaction is D-glyceraldehyde 3-phosphate + phosphate + NAD(+) = (2R)-3-phospho-glyceroyl phosphate + NADH + H(+). It functions in the pathway carbohydrate degradation; glycolysis; pyruvate from D-glyceraldehyde 3-phosphate: step 1/5. The sequence is that of Glyceraldehyde-3-phosphate dehydrogenase, glycosomal from Trypanosoma cruzi.